The following is a 585-amino-acid chain: MNIFALFETRVREALESLTRSGRLPEGLDLSRVVVEPPRDASHGDLATNAALVLAKEAKQNPKALGEALAEELRTDPRIVEASVAGPGFINLRLAPEVFQDVIRAALSEGENFGRGQMPGGPVNIEYVSANPTGPMHVGHGRGAVFGDALANLLAAAGRPVTREYYINDAGAQVDVLARSAYLRYREALGETITIPEGLYPGDYLKPVGMRLAETHGRTLLDQPEHEWLPQVRRFAIDAMMAMIREDLAAIGIRHDVFFSEATLQGENGGKVAELLDALRQKGLVYEGRLPPPKGQLPDDWEDREQTLFRSSQFGDDVDRALLKSDGSFTYFASDIAYHRDKWLRGANELIDVLGADHGGYVKRMQAAVKAVSDGQARLDVKLCQLVRLLRAGEPVKMSKRAGEFVTLRDVIDEVGRDAIRFMMLYRKNDATLDFDLAKVVEQSKDNPVFYVQYGHARRFSVLRQAREALPGEDFSPAALLADADLSVLTDPGEIEMMRLIAQYPRVLESAAAAHEPHRIAFYLYETASSLHSFWNKGKDLPQLRIVNPTDRNSTRARLALVEALGGVLASGLAVLGVSAPNEMR.

Residues 130–140 (ANPTGPMHVGH) carry the 'HIGH' region motif.

Belongs to the class-I aminoacyl-tRNA synthetase family. Monomer.

It is found in the cytoplasm. The catalysed reaction is tRNA(Arg) + L-arginine + ATP = L-arginyl-tRNA(Arg) + AMP + diphosphate. The sequence is that of Arginine--tRNA ligase from Methylorubrum extorquens (strain PA1) (Methylobacterium extorquens).